The primary structure comprises 209 residues: MSNDSSKAKQNQVDEAVEGEIITDNENETVTGEASLMDELTQANFRVEELEQALEAATAKVDEQKDSVIRAAAEVDNIRRRAAIDVEKARKFALEKFANELLPVIDNMERALQGTDAEAEATKAVYEGVELTLKSFIGTVEKFGLTVVNPQGETFNPEHHQAIGMQPSPDFPANTVMMVMQKGYILNERLLRPAMVMVSQGGAAVDTQA.

Positions 1-13 (MSNDSSKAKQNQV) are enriched in polar residues. A disordered region spans residues 1-27 (MSNDSSKAKQNQVDEAVEGEIITDNEN). Positions 15-27 (EAVEGEIITDNEN) are enriched in acidic residues.

This sequence belongs to the GrpE family. As to quaternary structure, homodimer.

It localises to the cytoplasm. Its function is as follows. Participates actively in the response to hyperosmotic and heat shock by preventing the aggregation of stress-denatured proteins, in association with DnaK and GrpE. It is the nucleotide exchange factor for DnaK and may function as a thermosensor. Unfolded proteins bind initially to DnaJ; upon interaction with the DnaJ-bound protein, DnaK hydrolyzes its bound ATP, resulting in the formation of a stable complex. GrpE releases ADP from DnaK; ATP binding to DnaK triggers the release of the substrate protein, thus completing the reaction cycle. Several rounds of ATP-dependent interactions between DnaJ, DnaK and GrpE are required for fully efficient folding. This is Protein GrpE from Shewanella sediminis (strain HAW-EB3).